Here is a 98-residue protein sequence, read N- to C-terminus: Large ribosomal subunit protein uL23 (98 aa).

Belongs to the universal ribosomal protein uL23 family. As to quaternary structure, part of the 50S ribosomal subunit. Contacts protein L29, and trigger factor when it is bound to the ribosome.

One of the early assembly proteins it binds 23S rRNA. One of the proteins that surrounds the polypeptide exit tunnel on the outside of the ribosome. Forms the main docking site for trigger factor binding to the ribosome. This Streptococcus equi subsp. equi (strain 4047) protein is Large ribosomal subunit protein uL23.